A 779-amino-acid polypeptide reads, in one-letter code: Phosphoribosylformylglycinamidine synthase subunit PurL (779 aa).

Histidine 52 is a catalytic residue. Residues tyrosine 55 and lysine 94 each coordinate ATP. A Mg(2+)-binding site is contributed by glutamate 96. Substrate-binding positions include 97–100 (SHNH) and arginine 119. The active-site Proton acceptor is the histidine 98. Residue aspartate 120 coordinates Mg(2+). Glutamine 243 contributes to the substrate binding site. Mg(2+) is bound at residue aspartate 271. Residue 315–317 (ESQ) participates in substrate binding. ATP is bound by residues asparagine 523 and glycine 560. Asparagine 561 contributes to the Mg(2+) binding site. Serine 563 is a binding site for substrate.

Belongs to the FGAMS family. As to quaternary structure, monomer. Part of the FGAM synthase complex composed of 1 PurL, 1 PurQ and 2 PurS subunits.

The protein resides in the cytoplasm. The catalysed reaction is N(2)-formyl-N(1)-(5-phospho-beta-D-ribosyl)glycinamide + L-glutamine + ATP + H2O = 2-formamido-N(1)-(5-O-phospho-beta-D-ribosyl)acetamidine + L-glutamate + ADP + phosphate + H(+). It functions in the pathway purine metabolism; IMP biosynthesis via de novo pathway; 5-amino-1-(5-phospho-D-ribosyl)imidazole from N(2)-formyl-N(1)-(5-phospho-D-ribosyl)glycinamide: step 1/2. In terms of biological role, part of the phosphoribosylformylglycinamidine synthase complex involved in the purines biosynthetic pathway. Catalyzes the ATP-dependent conversion of formylglycinamide ribonucleotide (FGAR) and glutamine to yield formylglycinamidine ribonucleotide (FGAM) and glutamate. The FGAM synthase complex is composed of three subunits. PurQ produces an ammonia molecule by converting glutamine to glutamate. PurL transfers the ammonia molecule to FGAR to form FGAM in an ATP-dependent manner. PurS interacts with PurQ and PurL and is thought to assist in the transfer of the ammonia molecule from PurQ to PurL. In Prochlorococcus marinus (strain MIT 9215), this protein is Phosphoribosylformylglycinamidine synthase subunit PurL.